The sequence spans 269 residues: 2-dehydro-3-deoxyphosphooctonate aldolase (269 aa).

This sequence belongs to the KdsA family.

It is found in the cytoplasm. It catalyses the reaction D-arabinose 5-phosphate + phosphoenolpyruvate + H2O = 3-deoxy-alpha-D-manno-2-octulosonate-8-phosphate + phosphate. The protein operates within carbohydrate biosynthesis; 3-deoxy-D-manno-octulosonate biosynthesis; 3-deoxy-D-manno-octulosonate from D-ribulose 5-phosphate: step 2/3. Its pathway is bacterial outer membrane biogenesis; lipopolysaccharide biosynthesis. The chain is 2-dehydro-3-deoxyphosphooctonate aldolase from Chlamydia felis (strain Fe/C-56) (Chlamydophila felis).